Reading from the N-terminus, the 435-residue chain is Nucleoredoxin (435 aa).

Serine 2 is modified (N-acetylserine). Residues 167-321 (PKPFREVIAG…VLELSDSNAA (155 aa)) enclose the Thioredoxin domain.

It belongs to the nucleoredoxin family. Associates with the phosphatase 2A holoenzyme. Interacts with PPP2CA; the interaction is direct. Interacts with DVL1 (via PDZ domain); the interaction is direct and regulated by oxidative stress.

Its subcellular location is the cytoplasm. It localises to the cytosol. The protein localises to the nucleus. It carries out the reaction [protein]-dithiol + NAD(+) = [protein]-disulfide + NADH + H(+). The enzyme catalyses [protein]-dithiol + NADP(+) = [protein]-disulfide + NADPH + H(+). Functionally, functions as a redox-dependent negative regulator of the Wnt signaling pathway, possibly by preventing ubiquitination of DVL3 by the BCR(KLHL12) complex. May also function as a transcriptional regulator act as a regulator of protein phosphatase 2A (PP2A). The polypeptide is Nucleoredoxin (NXN) (Homo sapiens (Human)).